The chain runs to 226 residues: Lipoprotein signal peptidase (226 aa).

A run of 3 helical transmembrane segments spans residues 12–32, 69–89, and 103–123; these read KVVAALIVLLLVVDQVIKIWV, FLSLFRIVAMGFCIYLLAKLV, and SLIIAGGIGNIIDSIFYGVIF. Residues aspartate 150 and aspartate 184 contribute to the active site. Residues 173 to 193 traverse the membrane as a helical segment; the sequence is FVFFHPVFNFADSCISIGLIL.

It belongs to the peptidase A8 family.

It localises to the cell inner membrane. The enzyme catalyses Release of signal peptides from bacterial membrane prolipoproteins. Hydrolyzes -Xaa-Yaa-Zaa-|-(S,diacylglyceryl)Cys-, in which Xaa is hydrophobic (preferably Leu), and Yaa (Ala or Ser) and Zaa (Gly or Ala) have small, neutral side chains.. It functions in the pathway protein modification; lipoprotein biosynthesis (signal peptide cleavage). This protein specifically catalyzes the removal of signal peptides from prolipoproteins. This chain is Lipoprotein signal peptidase, found in Porphyromonas gingivalis (strain ATCC 33277 / DSM 20709 / CIP 103683 / JCM 12257 / NCTC 11834 / 2561).